The following is a 256-amino-acid chain: Indole-3-glycerol phosphate synthase (256 aa).

The protein belongs to the TrpC family.

It carries out the reaction 1-(2-carboxyphenylamino)-1-deoxy-D-ribulose 5-phosphate + H(+) = (1S,2R)-1-C-(indol-3-yl)glycerol 3-phosphate + CO2 + H2O. Its pathway is amino-acid biosynthesis; L-tryptophan biosynthesis; L-tryptophan from chorismate: step 4/5. The sequence is that of Indole-3-glycerol phosphate synthase from Chlorobaculum tepidum (strain ATCC 49652 / DSM 12025 / NBRC 103806 / TLS) (Chlorobium tepidum).